We begin with the raw amino-acid sequence, 60 residues long: Small ribosomal subunit protein eS31 (60 aa).

Zn(2+) is bound by residues cysteine 32, cysteine 35, cysteine 50, and cysteine 53. The C4-type zinc finger occupies 32–53 (CPRCGAGVFMGEHKDRFSCGKC).

It belongs to the eukaryotic ribosomal protein eS31 family. As to quaternary structure, part of the 30S ribosomal subunit. It depends on Zn(2+) as a cofactor.

This Methanocorpusculum labreanum (strain ATCC 43576 / DSM 4855 / Z) protein is Small ribosomal subunit protein eS31.